A 271-amino-acid chain; its full sequence is Ferric enterobactin transport ATP-binding protein FepC (271 aa).

One can recognise an ABC transporter domain in the interval 8-244 (LRGEQLTLGY…ELIERIYGLR (237 aa)). An ATP-binding site is contributed by 40 to 47 (GPNGCGKS).

It belongs to the ABC transporter superfamily. The complex is composed of two ATP-binding proteins (FepC), two transmembrane proteins (FepD and FepG) and a solute-binding protein (FepB).

Its subcellular location is the cell inner membrane. It catalyses the reaction Fe(III)-enterobactin(out) + ATP + H2O = Fe(III)-enterobactin(in) + ADP + phosphate + H(+). Functionally, part of the ABC transporter complex FepBDGC involved in ferric enterobactin uptake. Responsible for energy coupling to the transport system. The protein is Ferric enterobactin transport ATP-binding protein FepC (fepC) of Escherichia coli (strain K12).